The following is a 234-amino-acid chain: Glucosamine-6-phosphate deaminase (234 aa).

The Proton acceptor; for enolization step role is filled by D62. N128 serves as the catalytic For ring-opening step. Residue H130 is the Proton acceptor; for ring-opening step of the active site. E135 serves as the catalytic For ring-opening step.

Belongs to the glucosamine/galactosamine-6-phosphate isomerase family. NagB subfamily.

It carries out the reaction alpha-D-glucosamine 6-phosphate + H2O = beta-D-fructose 6-phosphate + NH4(+). It functions in the pathway amino-sugar metabolism; N-acetylneuraminate degradation; D-fructose 6-phosphate from N-acetylneuraminate: step 5/5. Its function is as follows. Catalyzes the reversible isomerization-deamination of glucosamine 6-phosphate (GlcN6P) to form fructose 6-phosphate (Fru6P) and ammonium ion. This is Glucosamine-6-phosphate deaminase from Streptococcus uberis (strain ATCC BAA-854 / 0140J).